We begin with the raw amino-acid sequence, 459 residues long: tRNA modification GTPase MnmE (459 aa).

Residues R29, E86, and K125 each contribute to the (6S)-5-formyl-5,6,7,8-tetrahydrofolate site. Residues 221 to 382 (GMNVVIAGRP…LTEHLKAVMG (162 aa)) form the TrmE-type G domain. N231 is a binding site for K(+). GTP is bound by residues 231–236 (NAGKSS), 250–256 (TNIEGTT), and 275–278 (DTAG). S235 serves as a coordination point for Mg(2+). K(+)-binding residues include T250, I252, and T255. Residue T256 participates in Mg(2+) binding. K459 is a (6S)-5-formyl-5,6,7,8-tetrahydrofolate binding site.

The protein belongs to the TRAFAC class TrmE-Era-EngA-EngB-Septin-like GTPase superfamily. TrmE GTPase family. As to quaternary structure, homodimer. Heterotetramer of two MnmE and two MnmG subunits. It depends on K(+) as a cofactor.

Its subcellular location is the cytoplasm. Functionally, exhibits a very high intrinsic GTPase hydrolysis rate. Involved in the addition of a carboxymethylaminomethyl (cmnm) group at the wobble position (U34) of certain tRNAs, forming tRNA-cmnm(5)s(2)U34. This chain is tRNA modification GTPase MnmE, found in Marinomonas sp. (strain MWYL1).